Consider the following 184-residue polypeptide: Intraflagellar transport protein 22 homolog (184 aa).

Residues 10–17, 62–66, and 122–125 contribute to the GTP site; these read GPTESGKT, DCGGD, and KKPG.

This sequence belongs to the small GTPase superfamily. Rab family.

The sequence is that of Intraflagellar transport protein 22 homolog (ift22) from Xenopus tropicalis (Western clawed frog).